We begin with the raw amino-acid sequence, 604 residues long: Lipoprotein LpqB (604 aa).

Positions 1–27 are cleaved as a signal peptide; it reads MTMRAARLSGSTGLTAALVAVLLVLTG. The N-palmitoyl cysteine moiety is linked to residue Cys28. Residue Cys28 is the site of S-diacylglycerol cysteine attachment. The interval 35–60 is disordered; it reads SAPQALGTIDREPTSEGPTPPIAGRD.

It belongs to the LpqB lipoprotein family.

Its subcellular location is the cell membrane. This is Lipoprotein LpqB from Nocardia farcinica (strain IFM 10152).